The primary structure comprises 588 residues: Aspartate--tRNA ligase (588 aa).

Glu177 is a binding site for L-aspartate. An aspartate region spans residues 201-204 (QLFK). Arg223 serves as a coordination point for L-aspartate. ATP contacts are provided by residues 223 to 225 (RDE) and Gln232. Residue His451 participates in L-aspartate binding. Glu485 provides a ligand contact to ATP. Arg492 lines the L-aspartate pocket. Position 537–540 (537–540 (GLDR)) interacts with ATP.

This sequence belongs to the class-II aminoacyl-tRNA synthetase family. Type 1 subfamily. As to quaternary structure, homodimer.

It is found in the cytoplasm. The catalysed reaction is tRNA(Asp) + L-aspartate + ATP = L-aspartyl-tRNA(Asp) + AMP + diphosphate. Catalyzes the attachment of L-aspartate to tRNA(Asp) in a two-step reaction: L-aspartate is first activated by ATP to form Asp-AMP and then transferred to the acceptor end of tRNA(Asp). The polypeptide is Aspartate--tRNA ligase (Staphylococcus aureus (strain Newman)).